We begin with the raw amino-acid sequence, 629 residues long: ATP-dependent RNA helicase DBP6 (629 aa).

The interval 1-129 (MFASRFDPSQ…GIEDEAASTH (129 aa)) is disordered. Acidic residues predominate over residues 72–84 (ASEEDSSEVEEEE). A phosphoserine mark is found at Ser-73, Ser-77, and Ser-78. Over residues 88-103 (STHSTVLSRFKQTVSL) the composition is skewed to polar residues. Acidic residues predominate over residues 116-125 (KEDEGIEDEA). The short motif at 197–205 (TFPIQSIIL) is the Q motif element. Residues 221-401 (RNFTRRIGDI…GLNLYKPKLF (181 aa)) enclose the Helicase ATP-binding domain. 234–241 (AATGSGKT) serves as a coordination point for ATP. Residues 341-344 (DEAD) carry the DEAD box motif. The region spanning 437–603 (SICQFMAHSP…SVQPLELDFT (167 aa)) is the Helicase C-terminal domain.

This sequence belongs to the DEAD box helicase family. DDX51/DBP6 subfamily. In terms of assembly, associated with pre-ribosomal particles. Interacts with DBP9 and RSA3. Together with NOP8, URB1, URB2 and RSA3, forms an RNA-independent complex, which is required during early maturation of nascent 60S ribosomal subunits.

Its subcellular location is the nucleus. It is found in the nucleolus. The enzyme catalyses ATP + H2O = ADP + phosphate + H(+). Functionally, ATP-binding RNA helicase involved in the biogenesis of 60S ribosomal subunits and is required for the normal formation of 25S and 5.8S rRNAs. The protein is ATP-dependent RNA helicase DBP6 (DBP6) of Saccharomyces cerevisiae (strain ATCC 204508 / S288c) (Baker's yeast).